Reading from the N-terminus, the 341-residue chain is Phosphoribosylformylglycinamidine cyclo-ligase (341 aa).

This sequence belongs to the AIR synthase family.

It is found in the cytoplasm. The enzyme catalyses 2-formamido-N(1)-(5-O-phospho-beta-D-ribosyl)acetamidine + ATP = 5-amino-1-(5-phospho-beta-D-ribosyl)imidazole + ADP + phosphate + H(+). It participates in purine metabolism; IMP biosynthesis via de novo pathway; 5-amino-1-(5-phospho-D-ribosyl)imidazole from N(2)-formyl-N(1)-(5-phospho-D-ribosyl)glycinamide: step 2/2. The polypeptide is Phosphoribosylformylglycinamidine cyclo-ligase (Agathobacter rectalis (strain ATCC 33656 / DSM 3377 / JCM 17463 / KCTC 5835 / VPI 0990) (Eubacterium rectale)).